Consider the following 206-residue polypeptide: Ribosomal RNA large subunit methyltransferase E (206 aa).

Residues G55, W57, D75, D91, and D116 each contribute to the S-adenosyl-L-methionine site. The Proton acceptor role is filled by K156.

It belongs to the class I-like SAM-binding methyltransferase superfamily. RNA methyltransferase RlmE family.

The protein localises to the cytoplasm. It catalyses the reaction uridine(2552) in 23S rRNA + S-adenosyl-L-methionine = 2'-O-methyluridine(2552) in 23S rRNA + S-adenosyl-L-homocysteine + H(+). In terms of biological role, specifically methylates the uridine in position 2552 of 23S rRNA at the 2'-O position of the ribose in the fully assembled 50S ribosomal subunit. The protein is Ribosomal RNA large subunit methyltransferase E of Blochmanniella floridana.